A 402-amino-acid polypeptide reads, in one-letter code: Imidazolonepropionase (402 aa).

Fe(3+) contacts are provided by His66 and His68. Residues His66 and His68 each coordinate Zn(2+). Positions 75, 138, and 171 each coordinate 4-imidazolone-5-propanoate. Tyr138 is an N-formimidoyl-L-glutamate binding site. His236 lines the Fe(3+) pocket. His236 serves as a coordination point for Zn(2+). Gln239 is a 4-imidazolone-5-propanoate binding site. Asp311 contributes to the Fe(3+) binding site. Asp311 is a binding site for Zn(2+). The N-formimidoyl-L-glutamate site is built by Asn313 and Gly315. Thr316 is a 4-imidazolone-5-propanoate binding site.

Belongs to the metallo-dependent hydrolases superfamily. HutI family. The cofactor is Zn(2+). Requires Fe(3+) as cofactor.

It localises to the cytoplasm. The catalysed reaction is 4-imidazolone-5-propanoate + H2O = N-formimidoyl-L-glutamate. Its pathway is amino-acid degradation; L-histidine degradation into L-glutamate; N-formimidoyl-L-glutamate from L-histidine: step 3/3. Functionally, catalyzes the hydrolytic cleavage of the carbon-nitrogen bond in imidazolone-5-propanoate to yield N-formimidoyl-L-glutamate. It is the third step in the universal histidine degradation pathway. The sequence is that of Imidazolonepropionase from Vibrio cholerae serotype O1 (strain ATCC 39541 / Classical Ogawa 395 / O395).